The following is a 459-amino-acid chain: tRNA modification GTPase MnmE (459 aa).

The (6S)-5-formyl-5,6,7,8-tetrahydrofolate site is built by arginine 23, glutamate 88, and arginine 127. The TrmE-type G domain maps to 223–381 (GLNTVIIGKP…LKDTIENMFA (159 aa)). Asparagine 233 contributes to the K(+) binding site. Residues 233-238 (NVGKSS), 252-258 (TDIPGTT), and 277-280 (DTAG) each bind GTP. Mg(2+) is bound at residue serine 237. Residues threonine 252, isoleucine 254, and threonine 257 each coordinate K(+). Threonine 258 lines the Mg(2+) pocket. Residue lysine 459 coordinates (6S)-5-formyl-5,6,7,8-tetrahydrofolate.

Belongs to the TRAFAC class TrmE-Era-EngA-EngB-Septin-like GTPase superfamily. TrmE GTPase family. As to quaternary structure, homodimer. Heterotetramer of two MnmE and two MnmG subunits. K(+) serves as cofactor.

The protein resides in the cytoplasm. Functionally, exhibits a very high intrinsic GTPase hydrolysis rate. Involved in the addition of a carboxymethylaminomethyl (cmnm) group at the wobble position (U34) of certain tRNAs, forming tRNA-cmnm(5)s(2)U34. In Clostridium acetobutylicum (strain ATCC 824 / DSM 792 / JCM 1419 / IAM 19013 / LMG 5710 / NBRC 13948 / NRRL B-527 / VKM B-1787 / 2291 / W), this protein is tRNA modification GTPase MnmE.